A 590-amino-acid chain; its full sequence is Aspartate--tRNA(Asp/Asn) ligase (590 aa).

Glu-173 lines the L-aspartate pocket. The aspartate stretch occupies residues Gln-197–Lys-200. Residue Arg-219 coordinates L-aspartate. ATP contacts are provided by residues Arg-219–Glu-221 and Gln-228. Residue His-450 participates in L-aspartate binding. Glu-484 provides a ligand contact to ATP. An L-aspartate-binding site is contributed by Arg-491. ATP is bound at residue Gly-536 to Arg-539.

The protein belongs to the class-II aminoacyl-tRNA synthetase family. Type 1 subfamily. Homodimer.

The protein resides in the cytoplasm. It carries out the reaction tRNA(Asx) + L-aspartate + ATP = L-aspartyl-tRNA(Asx) + AMP + diphosphate. In terms of biological role, aspartyl-tRNA synthetase with relaxed tRNA specificity since it is able to aspartylate not only its cognate tRNA(Asp) but also tRNA(Asn). Reaction proceeds in two steps: L-aspartate is first activated by ATP to form Asp-AMP and then transferred to the acceptor end of tRNA(Asp/Asn). This is Aspartate--tRNA(Asp/Asn) ligase from Coxiella burnetii (strain Dugway 5J108-111).